The primary structure comprises 637 residues: Threonine--tRNA ligase (637 aa).

The 61-residue stretch at 1–61 (MLNITLPDCS…VEDSAVQIIT (61 aa)) folds into the TGS domain. Residues 242–533 (DHRKLGKQLD…LIENHAGSFP (292 aa)) form a catalytic region. Residues Cys333, His384, and His510 each contribute to the Zn(2+) site.

Belongs to the class-II aminoacyl-tRNA synthetase family. Homodimer. It depends on Zn(2+) as a cofactor.

The protein resides in the cytoplasm. It catalyses the reaction tRNA(Thr) + L-threonine + ATP = L-threonyl-tRNA(Thr) + AMP + diphosphate + H(+). Its function is as follows. Catalyzes the attachment of threonine to tRNA(Thr) in a two-step reaction: L-threonine is first activated by ATP to form Thr-AMP and then transferred to the acceptor end of tRNA(Thr). Also edits incorrectly charged L-seryl-tRNA(Thr). The sequence is that of Threonine--tRNA ligase from Neisseria gonorrhoeae (strain ATCC 700825 / FA 1090).